The primary structure comprises 298 residues: Apolipoprotein E (298 aa).

Residues Met-1–Ala-18 form the signal peptide. 6 tandem repeats follow at residues Leu-74–Gly-95, Pro-96–Ala-117, Gly-118–Gly-139, Gln-140–Gln-161, Arg-162–Glu-183, and Gly-223–Glu-244. The tract at residues Leu-74–Glu-244 is 8 X 22 AA approximate tandem repeats. Met-137 carries the methionine sulfoxide modification. Residue Ser-141 is modified to Phosphoserine. The interval His-152–Arg-162 is LDL and other lipoprotein receptors binding. Heparin is bound at residue Leu-156 to Arg-159. Residues Ala-204–Leu-272 are lipid-binding and lipoprotein association. Gly-218–Leu-225 is a binding site for heparin. Residues Arg-260–Leu-272 are specificity for association with VLDL.

It belongs to the apolipoprotein A1/A4/E family. As to quaternary structure, homotetramer. May interact with ABCA1; functionally associated with ABCA1 in the biogenesis of HDLs. May interact with APP/A4 amyloid-beta peptide; the interaction is extremely stable in vitro but its physiological significance is unclear. May interact with MAPT. May interact with MAP2. In the cerebrospinal fluid, interacts with secreted SORL1. Interacts with PMEL; this allows the loading of PMEL luminal fragment on ILVs to induce fibril nucleation. Post-translationally, APOE exists as multiple glycosylated and sialylated glycoforms within cells and in plasma. The extent of glycosylation and sialylation are tissue and context specific. Glycated in plasma VLDL. In terms of processing, phosphorylated by FAM20C in the extracellular medium.

Its subcellular location is the secreted. The protein localises to the extracellular space. It is found in the extracellular matrix. It localises to the extracellular vesicle. The protein resides in the endosome. Its subcellular location is the multivesicular body. In terms of biological role, APOE is an apolipoprotein, a protein associating with lipid particles, that mainly functions in lipoprotein-mediated lipid transport between organs via the plasma and interstitial fluids. APOE is a core component of plasma lipoproteins and is involved in their production, conversion and clearance. Apolipoproteins are amphipathic molecules that interact both with lipids of the lipoprotein particle core and the aqueous environment of the plasma. As such, APOE associates with chylomicrons, chylomicron remnants, very low density lipoproteins (VLDL) and intermediate density lipoproteins (IDL) but shows a preferential binding to high-density lipoproteins (HDL). It also binds a wide range of cellular receptors including the LDL receptor/LDLR, the LDL receptor-related proteins LRP1, LRP2 and LRP8 and the very low-density lipoprotein receptor/VLDLR that mediate the cellular uptake of the APOE-containing lipoprotein particles. Finally, APOE also has a heparin-binding activity and binds heparan-sulfate proteoglycans on the surface of cells, a property that supports the capture and the receptor-mediated uptake of APOE-containing lipoproteins by cells. A main function of APOE is to mediate lipoprotein clearance through the uptake of chylomicrons, VLDLs, and HDLs by hepatocytes. APOE is also involved in the biosynthesis by the liver of VLDLs as well as their uptake by peripheral tissues ensuring the delivery of triglycerides and energy storage in muscle, heart and adipose tissues. By participating in the lipoprotein-mediated distribution of lipids among tissues, APOE plays a critical role in plasma and tissues lipid homeostasis. APOE is also involved in two steps of reverse cholesterol transport, the HDLs-mediated transport of cholesterol from peripheral tissues to the liver, and thereby plays an important role in cholesterol homeostasis. First, it is functionally associated with ABCA1 in the biogenesis of HDLs in tissues. Second, it is enriched in circulating HDLs and mediates their uptake by hepatocytes. APOE also plays an important role in lipid transport in the central nervous system, regulating neuron survival and sprouting. This is Apolipoprotein E (APOE) from Hydrochoerus hydrochaeris (Capybara).